A 333-amino-acid polypeptide reads, in one-letter code: Ornithine carbamoyltransferase (333 aa).

Residues 56–59, arginine 107, and 134–137 each bind carbamoyl phosphate; these read STRT and HPTQ. Residues asparagine 167, aspartate 231, and 235 to 236 contribute to the L-ornithine site; that span reads SM. Carbamoyl phosphate contacts are provided by residues 273 to 274 and arginine 318; that span reads CL.

It belongs to the aspartate/ornithine carbamoyltransferase superfamily. OTCase family.

The protein resides in the cytoplasm. The enzyme catalyses carbamoyl phosphate + L-ornithine = L-citrulline + phosphate + H(+). It functions in the pathway amino-acid degradation; L-arginine degradation via ADI pathway; carbamoyl phosphate from L-arginine: step 2/2. Reversibly catalyzes the transfer of the carbamoyl group from carbamoyl phosphate (CP) to the N(epsilon) atom of ornithine (ORN) to produce L-citrulline. This Clostridium botulinum (strain 657 / Type Ba4) protein is Ornithine carbamoyltransferase.